The sequence spans 202 residues: Glycerol-3-phosphate acyltransferase (202 aa).

Helical transmembrane passes span 2–22, 85–105, 119–139, and 158–178; these read ANLL…AVVV, LAMV…HRFA, AINP…AFFF, and VLME…ILLI.

The protein belongs to the PlsY family. Probably interacts with PlsX.

The protein localises to the cell inner membrane. The catalysed reaction is an acyl phosphate + sn-glycerol 3-phosphate = a 1-acyl-sn-glycero-3-phosphate + phosphate. It functions in the pathway lipid metabolism; phospholipid metabolism. Catalyzes the transfer of an acyl group from acyl-phosphate (acyl-PO(4)) to glycerol-3-phosphate (G3P) to form lysophosphatidic acid (LPA). This enzyme utilizes acyl-phosphate as fatty acyl donor, but not acyl-CoA or acyl-ACP. The sequence is that of Glycerol-3-phosphate acyltransferase from Cupriavidus pinatubonensis (strain JMP 134 / LMG 1197) (Cupriavidus necator (strain JMP 134)).